The chain runs to 448 residues: Chromogranin-A (448 aa).

The N-terminal stretch at 1–18 is a signal peptide; it reads MRSAVVLALLLCAGQVIA. The cysteines at positions 35 and 56 are disulfide-linked. A disordered region spans residues 116-251; sequence LKEVTEEALS…AFNPHPSLSY (136 aa). 2 stretches are compositionally biased toward basic and acidic residues: residues 129 to 139 and 158 to 175; these read AEARGDSKEVE and QESR…KEAI. At Ser197 the chain carries Phosphoserine. Positions 205–222 are enriched in basic and acidic residues; sequence VDREKGLGAERGQQAKRE. The segment covering 223–238 has biased composition (acidic residues); sequence EEEDEAGEKADAEEEG. 2 positions are modified to phosphoserine: Ser258 and Ser288. The interval 263-429 is disordered; the sequence is LVVDGARKTG…PEDQELESLS (167 aa). Glycine amide is present on Gly308. The span at 310-350 shows a compositional bias: basic and acidic residues; the sequence is KSRELEQEKEQERLSKEWEDAKRWSKMDQLAKELTAEKRLE. Phosphoserine is present on residues Ser311, Ser324, and Ser362. A Methionine sulfoxide modification is found at Met363. 4 positions are modified to phosphoserine: Ser389, Ser393, Ser415, and Ser429. The span at 405–422 shows a compositional bias: basic and acidic residues; it reads YPEEKKEEEGSANRRPED. Ser415 is a glycosylation site (O-linked (Xyl...) (chondroitin sulfate) serine).

The protein belongs to the chromogranin/secretogranin protein family. In terms of assembly, self-interacts; self-assembly is promoted in vitro by chondroitin sulfate attachment which occurs at mildly acidic pH conditions. Interacts with SCG3. Interacts with ITPR1 in the secretory granules. O-glycosylated; contains chondroitin sulfate (CS). CS attachment is pH-dependent, being observed at mildly acidic conditions of pH 5 but not at neutral pH, and promotes self-assembly in vitro. Highly expressed in adrenal medulla and pituitary gland. Weaker expression detected in cerebrum, cerebellum, spinal cord, liver, thyroid gland, striated muscle, lung, spleen, kidney, parotid gland, and sublingual gland.

The protein localises to the secreted. It localises to the cytoplasmic vesicle. Its subcellular location is the secretory vesicle. The protein resides in the neuronal dense core vesicle. In terms of biological role, strongly inhibits glucose induced insulin release from the pancreas. Functionally, inhibits catecholamine release from chromaffin cells and noradrenergic neurons by acting as a non-competitive nicotinic cholinergic antagonist. Can induce mast cell migration, degranulation and production of cytokines and chemokines. Regulates granule biogenesis in endocrine cells by up-regulating the transcription of protease nexin 1 (SERPINE2) via a cAMP-PKA-SP1 pathway. This leads to inhibition of granule protein degradation in the Golgi complex which in turn promotes granule formation. In Equus caballus (Horse), this protein is Chromogranin-A (CHGA).